The sequence spans 883 residues: Collagen, type I, alpha 1b (883 aa).

Residues 1–883 (QMSYVDHSKS…LGGSNDVELR (883 aa)) are disordered. The span at 13–33 (PPQPGPMGPMGPRGPPGPPGS) shows a compositional bias: pro residues. 3 stretches are compositionally biased toward low complexity: residues 34 to 57 (SGPQ…AMGS), 113 to 122 (VPGVMGARGR), and 129 to 140 (SGARGNDGNTGP). 2 stretches are compositionally biased toward gly residues: residues 147 to 161 (TGGE…GNEG) and 185 to 194 (GTDGGPGAKG). 3 stretches are compositionally biased toward low complexity: residues 195 to 205 (SPGAAGLAGAP), 214 to 223 (AQGAVGAPGP), and 230 to 248 (PGAS…PGPA). Over residues 285–297 (GADGGAGGKGAPG) the composition is skewed to gly residues. Composition is skewed to low complexity over residues 310–326 (ATGE…PGSK) and 390–402 (VGAP…AGPA). The span at 415-424 (GAPGLGGPTG) shows a compositional bias: gly residues. The span at 425–444 (ARGAPGPAGNDGAKGEPGAA) shows a compositional bias: low complexity. Composition is skewed to gly residues over residues 445-454 (GAPGGLGAPG) and 478-487 (GGKGGDGAPG). Positions 512–542 (AGPTGPRGETGPPGPAGFAGPPGADGQPGAK) are enriched in low complexity. Residues 564-573 (GPKGGAGPPG) show a composition bias toward gly residues. Composition is skewed to low complexity over residues 574 to 584 (ATGFPGPAGRV), 717 to 726 (APGAVGPSGK), and 742 to 756 (SGPA…PAGA). Positions 757–771 (KGDRGEAGEAGDRGH) are enriched in basic and acidic residues. Positions 792–812 (PAGASGPAGPRGPAGSNGAPG) are enriched in low complexity. A compositionally biased stretch (pro residues) spans 821–836 (AGPPGPPGPAGPPGPP).

It belongs to the fibrillar collagen family.

The sequence is that of Collagen, type I, alpha 1b from Epinephelus costae (Goldblotch grouper).